Here is a 389-residue protein sequence, read N- to C-terminus: BTB/POZ domain-containing protein KCTD9 (389 aa).

Residues 3–82 form the KHA domain; it reads RVTLFLNGSP…PQTDSKPPEG (80 aa). Ser-11 carries the post-translational modification Phosphoserine. One can recognise a BTB domain in the interval 89 to 161; sequence DWLTLNVGGR…LRHGQLIVND (73 aa). 3 Pentapeptide repeat domains span residues 224–256, 258–297, and 338–376; these read NFSGADLSRLDLRYINFKMANLSRCNLAHANLC, ANLERADLSGSVLDCANLQGVKMLCSNAEGASLKLCNFED, and CNLRGATLAGTDLENCDLSGCDLQEANLRGSNVKGAIFE.

Forms pentamers. Component of a complex composed of 5 subunits of KCTD9 and 5 CUL3.

Its pathway is protein modification; protein ubiquitination. Substrate-specific adapter of a BCR (BTB-CUL3-RBX1) E3 ubiquitin-protein ligase complex, which mediates the ubiquitination of target proteins, leading to their degradation by the proteasome. In Homo sapiens (Human), this protein is BTB/POZ domain-containing protein KCTD9 (KCTD9).